The chain runs to 526 residues: MTSDSTIHELIQSYITKWYVIVPLAIIIYKVFDYFYVLSLRKRLGAAVPTNEETDGYFGFHLPFVLMSKKKDGTIIDFSIERYPELKHPETPTFEFPIFTVKLISTIDPENIKAILATQFSDFSLGTRHAHFAPLIGDGIFTLDGAGWKHSRAMLRPQFAREQVGHVKLLEPHVQVLFKHIRKNKGREFDLQELFFRFTVDSATEFLFGESVESLRDASIGMTSKSKDVDGIEDFTGAFNYSQNYLASRSIMQQFYWILNGKKFRECNAIVHKFADHYVQKALNLTEADLEKQAGYVFLYELVKQTRDPQVLRDQLLNILVAGRDTTAGLLSFVFFELARNPDVVAKLKDEIDTKFGLGEDARIEEITFESLKQCEYLKAVLNECLRLYPSVPQNFRVATKNTTLPRGGGKDGLSPILVRKGQTVMYSVYATHRMESVYGKDATTFRPERWFEPETRKLGWAFVPFNGGPRICLGQQFALTEASYVTVRLLQEFSTLTLDPNLEYPPKKMSHLTMSLFDGTNVQMY.

A helical membrane pass occupies residues 18-38 (WYVIVPLAIIIYKVFDYFYVL). A heme-binding site is contributed by cysteine 473.

This sequence belongs to the cytochrome P450 family. Heme is required as a cofactor.

It localises to the membrane. Its function is as follows. Together with an NADPH cytochrome P450 the enzyme system catalyzes the terminal hydroxylation as the first step in the assimilation of alkanes and fatty acids. The chain is Cytochrome P450 52A5 (CYP52A5) from Candida maltosa (Yeast).